We begin with the raw amino-acid sequence, 793 residues long: Probable alpha-fucosidase A (793 aa).

The first 20 residues, 1-20, serve as a signal peptide directing secretion; that stretch reads MLISGSSAALCALALPFAAA. N30, N83, N100, N104, N123, N179, N199, N234, N323, N597, N622, N660, and N757 each carry an N-linked (GlcNAc...) asparagine glycan.

It belongs to the glycosyl hydrolase 95 family.

Its subcellular location is the secreted. It carries out the reaction an alpha-L-fucoside + H2O = L-fucose + an alcohol. Its function is as follows. Alpha-fucosidase involved in degradation of fucosylated xyloglucans. Hydrolyzes alpha-1,2-linked fucose. In Aspergillus niger (strain ATCC MYA-4892 / CBS 513.88 / FGSC A1513), this protein is Probable alpha-fucosidase A (afcA).